The following is a 32-amino-acid chain: MVCPKILMKCKHDSDCLLDCVCLEDIGYCGVS.

Disulfide bonds link C3/C20, C10/C22, and C16/C29.

The protein belongs to the protease inhibitor I7 (squash-type serine protease inhibitor) family.

It localises to the secreted. In terms of biological role, inhibits trypsin. This Cucumis sativus (Cucumber) protein is Trypsin inhibitor 2b.